We begin with the raw amino-acid sequence, 184 residues long: Peptide deformylase (184 aa).

Positions 96 and 138 each coordinate Fe cation. Glutamate 139 is a catalytic residue. Histidine 142 is a binding site for Fe cation.

The protein belongs to the polypeptide deformylase family. Fe(2+) is required as a cofactor.

It catalyses the reaction N-terminal N-formyl-L-methionyl-[peptide] + H2O = N-terminal L-methionyl-[peptide] + formate. Its function is as follows. Removes the formyl group from the N-terminal Met of newly synthesized proteins. Requires at least a dipeptide for an efficient rate of reaction. N-terminal L-methionine is a prerequisite for activity but the enzyme has broad specificity at other positions. The protein is Peptide deformylase of Cytophaga hutchinsonii (strain ATCC 33406 / DSM 1761 / CIP 103989 / NBRC 15051 / NCIMB 9469 / D465).